We begin with the raw amino-acid sequence, 162 residues long: RNA pyrophosphohydrolase (162 aa).

Residues 11-155 form the Nudix hydrolase domain; it reads PYRPCVGIVL…KRAVYEEVVA (145 aa). The Nudix box motif lies at 45 to 66; sequence GGIDEGEKPREAALRELWEETG.

It belongs to the Nudix hydrolase family. RppH subfamily. It depends on a divalent metal cation as a cofactor.

In terms of biological role, accelerates the degradation of transcripts by removing pyrophosphate from the 5'-end of triphosphorylated RNA, leading to a more labile monophosphorylated state that can stimulate subsequent ribonuclease cleavage. The polypeptide is RNA pyrophosphohydrolase (Cereibacter sphaeroides (strain ATCC 17029 / ATH 2.4.9) (Rhodobacter sphaeroides)).